Consider the following 588-residue polypeptide: Arginine--tRNA ligase (588 aa).

Residues 126 to 136 (PNIAKEMHVGH) carry the 'HIGH' region motif.

This sequence belongs to the class-I aminoacyl-tRNA synthetase family. As to quaternary structure, monomer.

The protein localises to the cytoplasm. It catalyses the reaction tRNA(Arg) + L-arginine + ATP = L-arginyl-tRNA(Arg) + AMP + diphosphate. This chain is Arginine--tRNA ligase, found in Nostoc sp. (strain PCC 7120 / SAG 25.82 / UTEX 2576).